The primary structure comprises 100 residues: ESAT-6-like protein EsxB (100 aa).

The disordered stretch occupies residues 80–100 (GTQYTSTDEDQAGTLASSMNI).

The protein belongs to the WXG100 family. CFP-10 subfamily. As to quaternary structure, forms a tight 1:1 complex with EsxA. An artificial EsxA-EsxB heterodimer interacts with EspA.

Its subcellular location is the secreted. In terms of biological role, an exported protein. Plays a role in DNA conjugation, in at least a donor strain. The protein is ESAT-6-like protein EsxB of Mycolicibacterium smegmatis (strain ATCC 700084 / mc(2)155) (Mycobacterium smegmatis).